The following is a 243-amino-acid chain: Purine nucleoside phosphorylase YfiH (243 aa).

The Zn(2+) site is built by histidine 71, cysteine 107, and histidine 124.

The protein belongs to the purine nucleoside phosphorylase YfiH/LACC1 family. Homodimer. It depends on Cu(2+) as a cofactor. The cofactor is Zn(2+).

It catalyses the reaction adenosine + phosphate = alpha-D-ribose 1-phosphate + adenine. The enzyme catalyses S-methyl-5'-thioadenosine + phosphate = 5-(methylsulfanyl)-alpha-D-ribose 1-phosphate + adenine. The catalysed reaction is inosine + phosphate = alpha-D-ribose 1-phosphate + hypoxanthine. It carries out the reaction adenosine + H2O + H(+) = inosine + NH4(+). In terms of biological role, purine nucleoside enzyme that catalyzes the phosphorolysis of adenosine and inosine nucleosides, yielding D-ribose 1-phosphate and the respective free bases, adenine and hypoxanthine. Also catalyzes the phosphorolysis of S-methyl-5'-thioadenosine into adenine and S-methyl-5-thio-alpha-D-ribose 1-phosphate. Also has adenosine deaminase activity. May also act as a polyphenol oxidase: able to oxidize syringaldazine and 2,2'-azino-bis(3-ethylbenzthiazoline-6-sulfonic acid) (ABTS) in vitro. The protein is Purine nucleoside phosphorylase YfiH of Escherichia coli (strain K12).